The following is an 887-amino-acid chain: Translation initiation factor IF-2 (887 aa).

Disordered stretches follow at residues 31–87, 94–113, and 129–285; these read KLAQ…PRRI, SFVSEDLNSPQPPVPVDSDA, and VETE…KWRK. Residues 42 to 59 show a composition bias toward basic and acidic residues; the sequence is SSSEKPSTKVPEKIAKEK. 2 stretches are compositionally biased toward basic and acidic residues: residues 150 to 171 and 199 to 212; these read VVAKEPPAPKKEPEVVVKKEPP and PKKEDKPAPKEKTK. The segment covering 213 to 223 has biased composition (low complexity); sequence TTQTKPQQSSD. Residues 241-273 show a composition bias toward basic and acidic residues; the sequence is YRRDVSKKSGSDFRDRAKKDDNPKAFTGRDRYG. In terms of domain architecture, tr-type G spans 393-562; it reads TRPPIVAFMG…ALQAEVLELK (170 aa). The tract at residues 402–409 is G1; sequence GHVDHGKT. A GTP-binding site is contributed by 402-409; sequence GHVDHGKT. The segment at 427–431 is G2; sequence AITQH. Positions 448 to 451 are G3; it reads DTPG. Residues 448–452 and 502–505 each bind GTP; these read DTPGH and NKCD. The segment at 502–505 is G4; it reads NKCD. A G5 region spans residues 538–540; the sequence is SAK.

Belongs to the TRAFAC class translation factor GTPase superfamily. Classic translation factor GTPase family. IF-2 subfamily.

The protein resides in the cytoplasm. One of the essential components for the initiation of protein synthesis. Protects formylmethionyl-tRNA from spontaneous hydrolysis and promotes its binding to the 30S ribosomal subunits. Also involved in the hydrolysis of GTP during the formation of the 70S ribosomal complex. The polypeptide is Translation initiation factor IF-2 (Chlamydia caviae (strain ATCC VR-813 / DSM 19441 / 03DC25 / GPIC) (Chlamydophila caviae)).